A 289-amino-acid polypeptide reads, in one-letter code: 2-hydroxy-6-oxononadienedioate/2-hydroxy-6-oxononatrienedioate hydrolase (289 aa).

An AB hydrolase-1 domain is found at 39–275 (TVVMLHGSGP…RCGHWAQWEH (237 aa)). The Proton acceptor role is filled by H269.

This sequence belongs to the AB hydrolase superfamily. MhpC family. As to quaternary structure, homodimer.

The catalysed reaction is (2Z,4E)-2-hydroxy-6-oxonona-2,4-dienedioate + H2O = (2Z)-2-hydroxypenta-2,4-dienoate + succinate + H(+). It carries out the reaction (2Z,4E,7E)-2-hydroxy-6-oxonona-2,4,7-trienedioate + H2O = (2Z)-2-hydroxypenta-2,4-dienoate + fumarate + H(+). The protein operates within aromatic compound metabolism; 3-phenylpropanoate degradation. In terms of biological role, catalyzes the cleavage of the C5-C6 bond of 2-hydroxy-6-oxononadienedioate and 2-hydroxy-6-oxononatrienedioate, a dienol ring fission product of the bacterial meta-cleavage pathway for degradation of phenylpropionic acid. This is 2-hydroxy-6-oxononadienedioate/2-hydroxy-6-oxononatrienedioate hydrolase from Paraburkholderia xenovorans (strain LB400).